The following is an 872-amino-acid chain: Alanine--tRNA ligase (872 aa).

Zn(2+) is bound by residues His563, His567, Cys665, and His669.

It belongs to the class-II aminoacyl-tRNA synthetase family. It depends on Zn(2+) as a cofactor.

Its subcellular location is the cytoplasm. It carries out the reaction tRNA(Ala) + L-alanine + ATP = L-alanyl-tRNA(Ala) + AMP + diphosphate. Functionally, catalyzes the attachment of alanine to tRNA(Ala) in a two-step reaction: alanine is first activated by ATP to form Ala-AMP and then transferred to the acceptor end of tRNA(Ala). Also edits incorrectly charged Ser-tRNA(Ala) and Gly-tRNA(Ala) via its editing domain. The sequence is that of Alanine--tRNA ligase from Bacteroides fragilis (strain ATCC 25285 / DSM 2151 / CCUG 4856 / JCM 11019 / LMG 10263 / NCTC 9343 / Onslow / VPI 2553 / EN-2).